We begin with the raw amino-acid sequence, 130 residues long: Ribosome biogenesis inhibitor MINAS-60 (130 aa).

Residues 61–130 (SKVQRIPTRP…RRRRPVTSSC (70 aa)) are disordered. Residues 109–130 (KGRRRRRRMRRRRRRRPVTSSC) show a composition bias toward basic residues.

In terms of assembly, interacts with 60S ribosome assembly factors GTPBP4 and MRTO4.

Its subcellular location is the nucleus. It is found in the nucleolus. In terms of biological role, acts as a late-stage inhibitor of pre-60S ribosome assembly by preventing pre-60S ribosome export from nucleus. This Mus musculus (Mouse) protein is Ribosome biogenesis inhibitor MINAS-60.